The chain runs to 342 residues: Putative gluconeogenesis factor (342 aa).

A disordered region spans residues 318 to 342; the sequence is SEPPVAATQEIPIDGGRPRGDDAWR. Thr325 is subject to Phosphothreonine. Positions 333–342 are enriched in basic and acidic residues; the sequence is GRPRGDDAWR.

This sequence belongs to the gluconeogenesis factor family. In terms of processing, phosphorylated by PknA and/or PknB.

The protein localises to the cytoplasm. Required for morphogenesis under gluconeogenic growth conditions. The polypeptide is Putative gluconeogenesis factor (Mycobacterium tuberculosis (strain CDC 1551 / Oshkosh)).